A 425-amino-acid polypeptide reads, in one-letter code: Dihydroorotase (425 aa).

Zn(2+) is bound by residues His-56 and His-58. Substrate is bound by residues 58–60 (HYR) and Asn-90. 3 residues coordinate Zn(2+): Asp-148, His-175, and His-228. Asn-274 is a substrate binding site. Asp-301 lines the Zn(2+) pocket. The active site involves Asp-301. Substrate contacts are provided by residues His-305 and 319-320 (FG).

Belongs to the metallo-dependent hydrolases superfamily. DHOase family. Class I DHOase subfamily. It depends on Zn(2+) as a cofactor.

The catalysed reaction is (S)-dihydroorotate + H2O = N-carbamoyl-L-aspartate + H(+). Its pathway is pyrimidine metabolism; UMP biosynthesis via de novo pathway; (S)-dihydroorotate from bicarbonate: step 3/3. Functionally, catalyzes the reversible cyclization of carbamoyl aspartate to dihydroorotate. The polypeptide is Dihydroorotase (Lactobacillus delbrueckii subsp. bulgaricus (strain ATCC BAA-365 / Lb-18)).